We begin with the raw amino-acid sequence, 115 residues long: MADTLLKCTTRHVRLFTARVDNDDLVPSANELTLDLDPDNEFIWSESCISQVQQRFKQLVDAAAGGELSDYTLRRIGTDLEGFIRQLLQRGELSYNPEARVQNFSMGLPRTPELL.

This sequence belongs to the complex I NdhM subunit family. As to quaternary structure, NDH-1 can be composed of about 15 different subunits; different subcomplexes with different compositions have been identified which probably have different functions.

The protein localises to the cellular thylakoid membrane. The catalysed reaction is a plastoquinone + NADH + (n+1) H(+)(in) = a plastoquinol + NAD(+) + n H(+)(out). It carries out the reaction a plastoquinone + NADPH + (n+1) H(+)(in) = a plastoquinol + NADP(+) + n H(+)(out). Its function is as follows. NDH-1 shuttles electrons from an unknown electron donor, via FMN and iron-sulfur (Fe-S) centers, to quinones in the respiratory and/or the photosynthetic chain. The immediate electron acceptor for the enzyme in this species is believed to be plastoquinone. Couples the redox reaction to proton translocation, and thus conserves the redox energy in a proton gradient. Cyanobacterial NDH-1 also plays a role in inorganic carbon-concentration. The polypeptide is NAD(P)H-quinone oxidoreductase subunit M (Synechococcus sp. (strain CC9902)).